The chain runs to 70 residues: Melittin (70 aa).

Residues 1 to 21 form the signal peptide; that stretch reads MKFLVNVALVFMVVYISFIYA. The propeptide at 22-43 is removed by a dipeptidylpeptidase; that stretch reads APEPEPAPEAEAEADAEADPEA. Glycine 44 carries the N-formylglycine; partial modification. Glutamine 69 bears the Glutamine amide mark.

Belongs to the melittin family. As to quaternary structure, monomer (in solution and for integration into membranes), homotetramer (in solution and potentially as a toroidal pore in membranes), and potenially homomultimer (as a toroidal pore in membranes). In terms of tissue distribution, expressed by the venom gland.

It localises to the secreted. The protein localises to the target cell membrane. In terms of biological role, main toxin of bee venom with strong hemolytic activity and antimicrobial activity. It has enhancing effects on bee venom phospholipase A2 activity. This amphipathic toxin binds to negatively charged membrane surface and forms pore by inserting into lipid bilayers inducing the leakage of ions and molecules and the enhancement of permeability that ultimately leads to cell lysis. It acts as a voltage-gated pore with higher selectivity for anions over cations. The ion conductance has been shown to be voltage-dependent. Self-association of melittin in membranes is promoted by high ionic strength, but not by the presence of negatively charged lipids. In vivo, intradermal injection into healthy human volunteers produce sharp pain sensation and an inflammatory response. It produces pain by activating primary nociceptor cells directly and indirectly due to its ability to activate plasma membrane phospholipase A2 and its pore-forming activity. In Apis cerana cerana (Oriental honeybee), this protein is Melittin (MELT).